A 196-amino-acid chain; its full sequence is uncharacterized protein (196 aa).

It belongs to the NAD(P)H dehydrogenase (quinone) family.

This is an uncharacterized protein from Escherichia coli (strain K12).